A 429-amino-acid chain; its full sequence is Histidinol dehydrogenase (429 aa).

Residues Y130, Q191, and N214 each coordinate NAD(+). Positions 237, 259, and 262 each coordinate substrate. Residues Q259 and H262 each coordinate Zn(2+). Catalysis depends on proton acceptor residues E327 and H328. Substrate contacts are provided by H328, D361, E415, and H420. D361 contacts Zn(2+). Residue H420 participates in Zn(2+) binding.

This sequence belongs to the histidinol dehydrogenase family. Requires Zn(2+) as cofactor.

It carries out the reaction L-histidinol + 2 NAD(+) + H2O = L-histidine + 2 NADH + 3 H(+). It participates in amino-acid biosynthesis; L-histidine biosynthesis; L-histidine from 5-phospho-alpha-D-ribose 1-diphosphate: step 9/9. Its function is as follows. Catalyzes the sequential NAD-dependent oxidations of L-histidinol to L-histidinaldehyde and then to L-histidine. The protein is Histidinol dehydrogenase of Geobacter sulfurreducens (strain ATCC 51573 / DSM 12127 / PCA).